A 382-amino-acid polypeptide reads, in one-letter code: Queuine tRNA-ribosyltransferase (382 aa).

Asp93 acts as the Proton acceptor in catalysis. Substrate is bound by residues 93–97 (DSGGF), Asp147, Gln191, and Gly218. The segment at 249-255 (GVGKPED) is RNA binding. The active-site Nucleophile is the Asp268. Residues 273-277 (TRNAR) are RNA binding; important for wobble base 34 recognition. Residues Cys306, Cys308, Cys311, and His337 each coordinate Zn(2+).

It belongs to the queuine tRNA-ribosyltransferase family. As to quaternary structure, homodimer. Within each dimer, one monomer is responsible for RNA recognition and catalysis, while the other monomer binds to the replacement base PreQ1. The cofactor is Zn(2+).

The enzyme catalyses 7-aminomethyl-7-carbaguanine + guanosine(34) in tRNA = 7-aminomethyl-7-carbaguanosine(34) in tRNA + guanine. The protein operates within tRNA modification; tRNA-queuosine biosynthesis. In terms of biological role, catalyzes the base-exchange of a guanine (G) residue with the queuine precursor 7-aminomethyl-7-deazaguanine (PreQ1) at position 34 (anticodon wobble position) in tRNAs with GU(N) anticodons (tRNA-Asp, -Asn, -His and -Tyr). Catalysis occurs through a double-displacement mechanism. The nucleophile active site attacks the C1' of nucleotide 34 to detach the guanine base from the RNA, forming a covalent enzyme-RNA intermediate. The proton acceptor active site deprotonates the incoming PreQ1, allowing a nucleophilic attack on the C1' of the ribose to form the product. After dissociation, two additional enzymatic reactions on the tRNA convert PreQ1 to queuine (Q), resulting in the hypermodified nucleoside queuosine (7-(((4,5-cis-dihydroxy-2-cyclopenten-1-yl)amino)methyl)-7-deazaguanosine). The protein is Queuine tRNA-ribosyltransferase of Haemophilus influenzae (strain PittEE).